Consider the following 369-residue polypeptide: Large ribosomal subunit protein uL4 (369 aa).

Residue Thr-2 is modified to N-acetylthreonine.

The protein belongs to the universal ribosomal protein uL4 family.

In Dictyostelium discoideum (Social amoeba), this protein is Large ribosomal subunit protein uL4 (rpl4).